The sequence spans 374 residues: Fanconi anemia group F protein (374 aa).

In terms of assembly, belongs to the multisubunit FA complex composed of FANCA, FANCB, FANCC, FANCE, FANCF, FANCG, FANCL/PHF9 and FANCM. The complex is not found in FA patients. In complex with FANCA, FANCG and FANCL, but not with FANCC, nor FANCE, interacts with HES1; this interaction may be essential for the stability and nuclear localization of FA core complex proteins.

The protein localises to the nucleus. In terms of biological role, DNA repair protein that may operate in a postreplication repair or a cell cycle checkpoint function. May be implicated in interstrand DNA cross-link repair and in the maintenance of normal chromosome stability. The protein is Fanconi anemia group F protein (FANCF) of Homo sapiens (Human).